Here is a 121-residue protein sequence, read N- to C-terminus: Probable V-type proton ATPase subunit F (121 aa).

The protein belongs to the V-ATPase F subunit family. As to quaternary structure, V-ATPase is a heteromultimeric enzyme made up of two complexes: the ATP-hydrolytic V1 complex and the proton translocation V0 complex. The V1 complex consists of three catalytic AB heterodimers that form a heterohexamer, three peripheral stalks each consisting of EG heterodimers, one central rotor including subunits D and F, and the regulatory subunits C and H. The proton translocation complex V0 consists of the proton transport subunit a, a ring of proteolipid subunits c9c'', rotary subunit d, subunits e and f, and the accessory subunits vah-19/Ac45 and vah-20/PRR.

In terms of biological role, subunit of the V1 complex of vacuolar(H+)-ATPase (V-ATPase), a multisubunit enzyme composed of a peripheral complex (V1) that hydrolyzes ATP and a membrane integral complex (V0) that translocates protons. V-ATPase is responsible for acidifying and maintaining the pH of intracellular compartments and in some cell types, is targeted to the plasma membrane, where it is responsible for acidifying the extracellular environment. Required along with other vacuolar ATPase components for the removal of protein aggregates which form in immature oocytes in the distal gonad. This removal occurs as the oocytes mature and move to the proximal gonad, is triggered by the introduction of sperm through mating and occurs before fertilization. The introduction of sperm triggers V-ATPase accumulation in proximal oocytes and induces lysosomal acidification which leads to engulfing of protein aggregates by lysosomes and subsequent clearance of the aggregates. Lysosomal acidification also leads to changes in mitochondrial morphology and function. Mitochondria in distal immature oocytes are fragmented, produce high levels of reactive oxygen species (ROS) and have high membrane potential, indicative of metabolic inactivity. In contrast, mitochondria in proximal mature oocytes are tubular with lower ROS levels and membrane potential, indicative of an active metabolic state required for aggregate mobilization before clearance. The sequence is that of Probable V-type proton ATPase subunit F from Caenorhabditis elegans.